Consider the following 208-residue polypeptide: 3-demethoxyubiquinol 3-hydroxylase (208 aa).

Fe cation is bound by residues Glu57, Glu87, His90, Glu139, Glu171, and His174.

Belongs to the COQ7 family. The cofactor is Fe cation.

Its subcellular location is the cell membrane. It catalyses the reaction a 5-methoxy-2-methyl-3-(all-trans-polyprenyl)benzene-1,4-diol + AH2 + O2 = a 3-demethylubiquinol + A + H2O. It participates in cofactor biosynthesis; ubiquinone biosynthesis. Its function is as follows. Catalyzes the hydroxylation of 2-nonaprenyl-3-methyl-6-methoxy-1,4-benzoquinol during ubiquinone biosynthesis. In Janthinobacterium sp. (strain Marseille) (Minibacterium massiliensis), this protein is 3-demethoxyubiquinol 3-hydroxylase.